The primary structure comprises 230 residues: Large ribosomal subunit protein uL4 (230 aa).

The segment at 59-113 (RQGTHATKTRGEVSGGGKKPYRQKGTGRARQGSTRAPQFTGGGTVHGPQPRDYSQ) is disordered.

It belongs to the universal ribosomal protein uL4 family. In terms of assembly, part of the 50S ribosomal subunit.

Its function is as follows. One of the primary rRNA binding proteins, this protein initially binds near the 5'-end of the 23S rRNA. It is important during the early stages of 50S assembly. It makes multiple contacts with different domains of the 23S rRNA in the assembled 50S subunit and ribosome. Forms part of the polypeptide exit tunnel. This chain is Large ribosomal subunit protein uL4, found in Nocardia farcinica (strain IFM 10152).